The sequence spans 502 residues: NAD(P)H-quinone oxidoreductase chain 4, chloroplastic (502 aa).

14 helical membrane-spanning segments follow: residues 4–24 (FPWL…IFFL), 37–57 (ISIC…HFQL), 87–107 (LGSI…AWPV), 113–130 (LFYF…GLFS), 134–154 (LLLF…LLSM), 167–187 (FILY…GMGL), 213–233 (ILLY…IPLH), 244–264 (HYST…YGLI), 274–294 (AHYL…IYAA), 315–335 (MGFI…GAIL), 336–356 (QILS…TASD), 388–408 (LALP…GLIT), 419–439 (LITF…LSML), and 464–484 (LFIL…PDFV).

Belongs to the complex I subunit 4 family.

It is found in the plastid. The protein localises to the chloroplast thylakoid membrane. The enzyme catalyses a plastoquinone + NADH + (n+1) H(+)(in) = a plastoquinol + NAD(+) + n H(+)(out). It carries out the reaction a plastoquinone + NADPH + (n+1) H(+)(in) = a plastoquinol + NADP(+) + n H(+)(out). The protein is NAD(P)H-quinone oxidoreductase chain 4, chloroplastic of Lolium perenne (Perennial ryegrass).